The primary structure comprises 491 residues: MQPAMMMFSSKYWARRGFSLDSAVPEEHQLLGNLTVNKSNSGKNDDKKGNKGSSRSETAPDSGKTAVVFSLRNEVGGLVKALKLFQEKHVNMVHIESRKSRRRSSEVEIFVDCECGKTEFNELIQLLKFQTTIVTLNPPENIWTEEEELEDVPWFPRKISELDKCSHRVLMYGSELDADHPGFKDNVYRQRRKYFVDVAMSYKYGQPIPRVEYTEEETKTWGVVFRELSRLYPTHACQEYLKNFPLLTKYCGYREDNVPQLEDVSMFLKERSGFAVRPVAGYLSPRDFLAGLAYRVFHCTQYVRHSSDPLYTPEPDTCHELLGHVPLLADPKFAQFSQEIGLASLGASDEDVQKLATCYFFTIEFGLCKQEGQLRAYGAGLLSSIGELKHALSDKACVKAFDPKTTCLQECLITTFQEAYFVSESFEEAKEKMREFAKSITRPFSVHFNPYTQSVEVLKDSRSIESVVQDLRSDLNTVCDALNKMNQYLGV.

Serine 19 is modified (phosphoserine). The interval 33–63 (NLTVNKSNSGKNDDKKGNKGSSRSETAPDSG) is disordered. The ACT domain maps to 66-141 (AVVFSLRNEV…TIVTLNPPEN (76 aa)). Fe cation is bound by residues histidine 319, histidine 324, and glutamate 364.

Belongs to the biopterin-dependent aromatic amino acid hydroxylase family. In terms of assembly, interacts with DNAJC12. It depends on Fe(2+) as a cofactor.

It carries out the reaction (6R)-L-erythro-5,6,7,8-tetrahydrobiopterin + L-tryptophan + O2 = 5-hydroxy-L-tryptophan + (4aS,6R)-4a-hydroxy-L-erythro-5,6,7,8-tetrahydrobiopterin. It functions in the pathway aromatic compound metabolism; serotonin biosynthesis; serotonin from L-tryptophan: step 1/2. In Equus caballus (Horse), this protein is Tryptophan 5-hydroxylase 2 (TPH2).